We begin with the raw amino-acid sequence, 156 residues long: Ribosomal RNA large subunit methyltransferase H (156 aa).

Residues leucine 73, glycine 104, and 123–128 contribute to the S-adenosyl-L-methionine site; that span reads LSDLTL.

The protein belongs to the RNA methyltransferase RlmH family. In terms of assembly, homodimer.

Its subcellular location is the cytoplasm. The catalysed reaction is pseudouridine(1915) in 23S rRNA + S-adenosyl-L-methionine = N(3)-methylpseudouridine(1915) in 23S rRNA + S-adenosyl-L-homocysteine + H(+). In terms of biological role, specifically methylates the pseudouridine at position 1915 (m3Psi1915) in 23S rRNA. The sequence is that of Ribosomal RNA large subunit methyltransferase H from Leptothrix cholodnii (strain ATCC 51168 / LMG 8142 / SP-6) (Leptothrix discophora (strain SP-6)).